Here is an 87-residue protein sequence, read N- to C-terminus: UPF0473 protein Dred_0776 (87 aa).

Belongs to the UPF0473 family.

In Desulforamulus reducens (strain ATCC BAA-1160 / DSM 100696 / MI-1) (Desulfotomaculum reducens), this protein is UPF0473 protein Dred_0776.